Consider the following 454-residue polypeptide: Tetrahydroanabasine acetyltransferase (454 aa).

Catalysis depends on proton acceptor residues His164 and Asp389.

The protein belongs to the plant acyltransferase family. In terms of assembly, monomer.

The catalysed reaction is tetrahydroanabasine + acetyl-CoA = ammodendrine + CoA. It functions in the pathway alkaloid biosynthesis. Its function is as follows. Tetrahydroanabasine acetyltransferase involved in the accumulation of quinolizidine type antinutritional alkaloids (QAs) natural products. QAs impart a bitter taste to plants, acting as repellents and toxicants for herbivores and predators, and possess a variety of pharmacological effects, including sedative, anticonvulsant, anti-inflammatory, antiviral, antitumor, antipyretic, anti-hepatitis B, antifibrotic, antiallergic, antidiarrheal, analgesic and antimicrobial activities. Mediates the conversion of tetrahydroanabasine into ammodendrine. This chain is Tetrahydroanabasine acetyltransferase, found in Lupinus albus (White lupine).